The primary structure comprises 307 residues: Ninja-family protein 5 (307 aa).

2 disordered regions span residues 1–159 (MASR…EHTV) and 173–208 (TAGS…EPQP). The span at 8 to 30 (GGFGRDGGQAPVGGAGAAPGPGG) shows a compositional bias: gly residues. Polar residues-rich tracts occupy residues 63–83 (QRSS…GTSC) and 173–183 (TAGSPTPSRPQ).

This sequence belongs to the Ninja family.

It is found in the nucleus. The protein is Ninja-family protein 5 of Zea mays (Maize).